Consider the following 445-residue polypeptide: Signal recognition particle 54 kDa protein (445 aa).

GTP-binding positions include 106 to 113 (GLQGSGKT), 186 to 190 (DTAGR), and 244 to 247 (TKLD).

The protein belongs to the GTP-binding SRP family. SRP54 subfamily. Part of the signal recognition particle protein translocation system, which is composed of SRP and FtsY. Archaeal SRP consists of a 7S RNA molecule of 300 nucleotides and two protein subunits: SRP54 and SRP19.

It is found in the cytoplasm. The catalysed reaction is GTP + H2O = GDP + phosphate + H(+). Its function is as follows. Involved in targeting and insertion of nascent membrane proteins into the cytoplasmic membrane. Binds to the hydrophobic signal sequence of the ribosome-nascent chain (RNC) as it emerges from the ribosomes. The SRP-RNC complex is then targeted to the cytoplasmic membrane where it interacts with the SRP receptor FtsY. This chain is Signal recognition particle 54 kDa protein, found in Methanobrevibacter smithii (strain ATCC 35061 / DSM 861 / OCM 144 / PS).